A 68-amino-acid chain; its full sequence is Conotoxin Mr3.4 (68 aa).

The signal sequence occupies residues 1-19 (MSKLGVLLTICLLLFPLTA). The propeptide occupies 20 to 49 (VPLDGDQPADRPAERMQDDISSERHPFFDR). Intrachain disulfides connect C53–C67, C54–C63, and C59–C66. P65 carries the 4-hydroxyproline modification.

It belongs to the conotoxin M superfamily. Expressed by the venom duct.

The protein resides in the secreted. The protein is Conotoxin Mr3.4 of Conus marmoreus (Marble cone).